Consider the following 681-residue polypeptide: Propionyl-CoA carboxylase alpha chain (681 aa).

Positions 1–466 (MFNKILIANR…TTAFIAEEYP (466 aa)) constitute a Biotin carboxylation domain. ATP is bound by residues K116, 148 to 209 (SNQI…PRHI), E200, and N235. One can recognise an ATP-grasp domain in the interval 120 to 317 (KKIAQEANVS…LVEQMIRVAA (198 aa)). The Mg(2+) site is built by E275, E288, and N290. 3 residues coordinate Mn(2+): E275, E288, and N290. Residue E288 is part of the active site. F348 is a binding site for biotin. A Biotinyl-binding domain is found at 602–681 (LMPEKLPPDT…AVDDVIMEFE (80 aa)). The residue at position 647 (K647) is an N6-biotinyllysine.

The holoenzyme is a dodecamer composed of 6 PccA/alpha subunits and 6 PccB/beta subunits. It depends on Mg(2+) as a cofactor. Requires Mn(2+) as cofactor. The cofactor is biotin. The biotin cofactor is covalently attached to the C-terminal biotinyl-binding domain and is required for the catalytic activity.

The enzyme catalyses propanoyl-CoA + hydrogencarbonate + ATP = (S)-methylmalonyl-CoA + ADP + phosphate + H(+). It participates in metabolic intermediate metabolism; propanoyl-CoA degradation; succinyl-CoA from propanoyl-CoA: step 1/3. Its function is as follows. This is one of the 2 subunits of the biotin-dependent propionyl-CoA carboxylase (PCC), the enzyme catalyzing the carboxylation of propionyl-CoA/propanoyl-CoA to D-methylmalonyl-CoA/(S)-methylmalonyl-CoA. Within the holoenzyme, the alpha subunit catalyzes the ATP-dependent carboxylation of the biotin carried by the biotin carboxyl carrier (BCC) domain, while the beta subunit then tranfers the carboxyl group from carboxylated biotin to propionyl-CoA. The polypeptide is Propionyl-CoA carboxylase alpha chain (Ruegeria pomeroyi (strain ATCC 700808 / DSM 15171 / DSS-3) (Silicibacter pomeroyi)).